A 297-amino-acid polypeptide reads, in one-letter code: UTP--glucose-1-phosphate uridylyltransferase (297 aa).

The protein belongs to the UDPGP type 2 family.

The catalysed reaction is alpha-D-glucose 1-phosphate + UTP + H(+) = UDP-alpha-D-glucose + diphosphate. It functions in the pathway carbohydrate metabolism; nucleotide-sugar metabolism. It participates in bacterial outer membrane biogenesis; lipopolysaccharide biosynthesis. The protein is UTP--glucose-1-phosphate uridylyltransferase (galF) of Escherichia coli O157:H7.